The following is a 478-amino-acid chain: Uronate isomerase (478 aa).

It belongs to the metallo-dependent hydrolases superfamily. Uronate isomerase family.

It catalyses the reaction D-glucuronate = D-fructuronate. The catalysed reaction is aldehydo-D-galacturonate = keto-D-tagaturonate. Its pathway is carbohydrate metabolism; pentose and glucuronate interconversion. In Bacillus pumilus (strain SAFR-032), this protein is Uronate isomerase.